The following is a 373-amino-acid chain: D-alanine--D-alanine ligase (373 aa).

Residues 156-363 form the ATP-grasp domain; it reads KKLLAAEGLP…YPTLLAAMVD (208 aa). 184 to 239 is a binding site for ATP; that stretch reads RERLGLPVFVKPARGGSSIGVSRVTAWDELPAAVALARRHDPKVIVEAAVIGRELE. Mg(2+) is bound by residues Asp-318, Glu-330, and Asn-332.

This sequence belongs to the D-alanine--D-alanine ligase family. Mg(2+) is required as a cofactor. The cofactor is Mn(2+).

The protein resides in the cytoplasm. It carries out the reaction 2 D-alanine + ATP = D-alanyl-D-alanine + ADP + phosphate + H(+). It participates in cell wall biogenesis; peptidoglycan biosynthesis. Cell wall formation. The chain is D-alanine--D-alanine ligase from Mycolicibacterium smegmatis (strain ATCC 700084 / mc(2)155) (Mycobacterium smegmatis).